The following is a 154-amino-acid chain: uncharacterized protein (154 aa).

One can recognise an HTH marR-type domain in the interval 14–146 (AMNLYRVFAR…LIVLLKKAGI (133 aa)). A DNA-binding region (H-T-H motif) is located at residues 60 to 83 (LQQIGSRLLLVSGNVTYVIDKLER).

This is an uncharacterized protein from Bacillus subtilis (strain 168).